The sequence spans 424 residues: UDP-N-acetylglucosamine 1-carboxyvinyltransferase (424 aa).

22 to 23 (KN) is a phosphoenolpyruvate binding site. UDP-N-acetyl-alpha-D-glucosamine is bound at residue Arg98. Cys122 acts as the Proton donor in catalysis. At Cys122 the chain carries 2-(S-cysteinyl)pyruvic acid O-phosphothioketal. Residues 127–131 (RPVDQ), Asp312, and Ile334 each bind UDP-N-acetyl-alpha-D-glucosamine.

This sequence belongs to the EPSP synthase family. MurA subfamily.

It is found in the cytoplasm. It carries out the reaction phosphoenolpyruvate + UDP-N-acetyl-alpha-D-glucosamine = UDP-N-acetyl-3-O-(1-carboxyvinyl)-alpha-D-glucosamine + phosphate. The protein operates within cell wall biogenesis; peptidoglycan biosynthesis. In terms of biological role, cell wall formation. Adds enolpyruvyl to UDP-N-acetylglucosamine. The protein is UDP-N-acetylglucosamine 1-carboxyvinyltransferase of Xanthomonas axonopodis pv. citri (strain 306).